A 221-amino-acid polypeptide reads, in one-letter code: Octanoyltransferase (221 aa).

Residues P40 to L218 form the BPL/LPL catalytic domain. Substrate is bound by residues R82–H89, A149–G151, and G162–A164. C180 serves as the catalytic Acyl-thioester intermediate.

Belongs to the LipB family.

It is found in the cytoplasm. It catalyses the reaction octanoyl-[ACP] + L-lysyl-[protein] = N(6)-octanoyl-L-lysyl-[protein] + holo-[ACP] + H(+). Its pathway is protein modification; protein lipoylation via endogenous pathway; protein N(6)-(lipoyl)lysine from octanoyl-[acyl-carrier-protein]: step 1/2. Catalyzes the transfer of endogenously produced octanoic acid from octanoyl-acyl-carrier-protein onto the lipoyl domains of lipoate-dependent enzymes. Lipoyl-ACP can also act as a substrate although octanoyl-ACP is likely to be the physiological substrate. This Nostoc sp. (strain PCC 7120 / SAG 25.82 / UTEX 2576) protein is Octanoyltransferase.